The sequence spans 773 residues: DEAD-box ATP-dependent RNA helicase 32 (773 aa).

The segment at I28–G71 is disordered. Over residues S43–K56 the composition is skewed to low complexity. The Q motif signature appears at A80 to R108. In terms of domain architecture, Helicase ATP-binding spans L111–I287. A124 to T131 lines the ATP pocket. Positions D235–D238 match the DEAD box motif. In terms of domain architecture, Helicase C-terminal spans P309–Q462. A coiled-coil region spans residues D664–A715. Over residues L699–K708 the composition is skewed to basic residues. Residues L699–D755 form a disordered region.

Belongs to the DEAD box helicase family. DDX10/DBP4 subfamily.

It carries out the reaction ATP + H2O = ADP + phosphate + H(+). The chain is DEAD-box ATP-dependent RNA helicase 32 from Oryza sativa subsp. japonica (Rice).